A 298-amino-acid chain; its full sequence is Protease HtpX homolog (298 aa).

A run of 2 helical transmembrane segments spans residues 15–35 and 39–59; these read YVMI…GYVF and AMAG…MMIA. H143 lines the Zn(2+) pocket. E144 is a catalytic residue. H147 lines the Zn(2+) pocket. Transmembrane regions (helical) follow at residues 158–178 and 197–217; these read IALA…RSFW and IVMM…TTIA. E226 lines the Zn(2+) pocket.

The protein belongs to the peptidase M48B family. Requires Zn(2+) as cofactor.

It localises to the cell membrane. The protein is Protease HtpX homolog of Pediococcus pentosaceus (strain ATCC 25745 / CCUG 21536 / LMG 10740 / 183-1w).